The sequence spans 863 residues: Penicillin-binding protein 1A (863 aa).

Residues 1 to 28 lie on the Cytoplasmic side of the membrane; that stretch reads MTENRDNKTSQSEKTTQKKKKKKFKAFK. The chain crosses the membrane as a helical; Signal-anchor for type II membrane protein span at residues 29–49; it reads IILITFITLIVISLVTAIGIT. The Extracellular segment spans residues 50 to 863; it reads LAIIKTSPDI…KPIIRPKKHF (814 aa). The interval 71 to 248 is transglycosylase; sequence SKIYDDKGEL…PSVYYPYSRT (178 aa). The active-site Proton donor; for transglycosylase activity is glutamate 110. The transpeptidase stretch occupies residues 392–674; that stretch reads ASAVLTDYHT…AAALFGKIMN (283 aa). Residue serine 431 is the Acyl-ester intermediate; for transpeptidase activity of the active site. Residues 774–863 form a disordered region; that stretch reads DDDMYVLPDK…KPIIRPKKHF (90 aa). Over residues 808 to 836 the composition is skewed to polar residues; that stretch reads EDATNEASTEPSPNTDTVPEDSTNNLDPT. Residues 837–846 are compositionally biased toward basic and acidic residues; that stretch reads KNTEKKPSDK. Positions 847-863 are enriched in basic residues; sequence KNKKHVIKPIIRPKKHF.

In the N-terminal section; belongs to the glycosyltransferase 51 family. It in the C-terminal section; belongs to the transpeptidase family.

The protein localises to the cell membrane. It catalyses the reaction [GlcNAc-(1-&gt;4)-Mur2Ac(oyl-L-Ala-gamma-D-Glu-L-Lys-D-Ala-D-Ala)](n)-di-trans,octa-cis-undecaprenyl diphosphate + beta-D-GlcNAc-(1-&gt;4)-Mur2Ac(oyl-L-Ala-gamma-D-Glu-L-Lys-D-Ala-D-Ala)-di-trans,octa-cis-undecaprenyl diphosphate = [GlcNAc-(1-&gt;4)-Mur2Ac(oyl-L-Ala-gamma-D-Glu-L-Lys-D-Ala-D-Ala)](n+1)-di-trans,octa-cis-undecaprenyl diphosphate + di-trans,octa-cis-undecaprenyl diphosphate + H(+). It carries out the reaction Preferential cleavage: (Ac)2-L-Lys-D-Ala-|-D-Ala. Also transpeptidation of peptidyl-alanyl moieties that are N-acyl substituents of D-alanine.. It participates in cell wall biogenesis; peptidoglycan biosynthesis. Its function is as follows. Cell wall formation. Synthesis of cross-linked peptidoglycan from the lipid intermediates. The enzyme has a penicillin-insensitive transglycosylase N-terminal domain (formation of linear glycan strands) and a penicillin-sensitive transpeptidase C-terminal domain (cross-linking of the peptide subunits). This Clostridium novyi (strain NT) protein is Penicillin-binding protein 1A (pbpA).